The sequence spans 172 residues: VQ motif-containing protein 17 (172 aa).

The VQ motif lies at 51–60; that stretch reads FREIVQNLTG. Residues 60–97 are disordered; sequence GKQDHHHHDLPHQKGLKRNPRSRRSHDHHEVHDMNKSH. Positions 61–71 are enriched in basic and acidic residues; that stretch reads KQDHHHHDLPH. A compositionally biased stretch (basic residues) spans 72-85; sequence QKGLKRNPRSRRSH. Residues 86 to 95 are compositionally biased toward basic and acidic residues; the sequence is DHHEVHDMNK.

The protein resides in the nucleus. Functionally, may function as positive regulator of plant growth. This Arabidopsis thaliana (Mouse-ear cress) protein is VQ motif-containing protein 17.